A 231-amino-acid chain; its full sequence is MSEIKDVIVQGLWKNNSALVQLLGLCPLLAVTSTATNALGLGLATTLVLTLTNLTISTLRHWTPAEIRIPIYVMIIASVVSAVQMLINAYAFGLYQSLGIFIPLIVTNCIVVGRAEAFAAKKGPALSALDGFSIGTGATCAMFVLGSLREIIGNGTLFDGADALLGSWAKVLRVEIFHTDSPFLLAMLPPGAFIGLGLMLAGKYLIDERMKKRRAEAAAERALPNGETGNV.

The next 6 helical transmembrane spans lie at 18 to 38, 39 to 59, 63 to 83, 86 to 106, 125 to 145, and 182 to 202; these read ALVQ…ATNA, LGLG…ISTL, TPAE…VSAV, LINA…PLIV, ALSA…MFVL, and PFLL…MLAG.

Belongs to the NqrDE/RnfAE family. As to quaternary structure, the complex is composed of six subunits: RsxA, RsxB, RsxC, RsxD, RsxE and RsxG.

It is found in the cell inner membrane. Its function is as follows. Part of a membrane-bound complex that couples electron transfer with translocation of ions across the membrane. Required to maintain the reduced state of SoxR. The protein is Ion-translocating oxidoreductase complex subunit E of Shigella flexneri serotype 5b (strain 8401).